Reading from the N-terminus, the 419-residue chain is Maltoporin 2 (419 aa).

The first 23 residues, 1–23 (MKTSLRTLSVALAAALVSPSVLA), serve as a signal peptide directing secretion.

It belongs to the porin LamB (TC 1.B.3) family. In terms of assembly, homotrimer formed of three 18-stranded antiparallel beta-barrels, containing three independent channels.

It is found in the cell outer membrane. It catalyses the reaction beta-maltose(in) = beta-maltose(out). Functionally, involved in the transport of maltose and maltodextrins. The polypeptide is Maltoporin 2 (Yersinia pseudotuberculosis serotype O:1b (strain IP 31758)).